A 62-amino-acid chain; its full sequence is Small ribosomal subunit protein eS27 (62 aa).

Zn(2+)-binding residues include Cys17, Cys20, Cys36, and Cys39. The segment at 17–39 (CPDCENEQVVFERASTVVECTVC) adopts a C4-type zinc-finger fold.

This sequence belongs to the eukaryotic ribosomal protein eS27 family. In terms of assembly, part of the 30S ribosomal subunit. Requires Zn(2+) as cofactor.

This is Small ribosomal subunit protein eS27 from Methanoculleus marisnigri (strain ATCC 35101 / DSM 1498 / JR1).